Consider the following 77-residue polypeptide: uncharacterized protein (77 aa).

This is an uncharacterized protein from Bacillus licheniformis.